Reading from the N-terminus, the 466-residue chain is tRNA(Ile)-lysidine synthase (466 aa).

26–31 (SGGSDS) serves as a coordination point for ATP.

This sequence belongs to the tRNA(Ile)-lysidine synthase family.

The protein resides in the cytoplasm. The catalysed reaction is cytidine(34) in tRNA(Ile2) + L-lysine + ATP = lysidine(34) in tRNA(Ile2) + AMP + diphosphate + H(+). Ligates lysine onto the cytidine present at position 34 of the AUA codon-specific tRNA(Ile) that contains the anticodon CAU, in an ATP-dependent manner. Cytidine is converted to lysidine, thus changing the amino acid specificity of the tRNA from methionine to isoleucine. This is tRNA(Ile)-lysidine synthase from Oceanobacillus iheyensis (strain DSM 14371 / CIP 107618 / JCM 11309 / KCTC 3954 / HTE831).